The primary structure comprises 31 residues: Branched-chain-amino-acid aminotransferase, mitochondrial (31 aa).

The N-terminal 27 residues, 1–27 (MAAAALRQIWARKFLPVPWLLCGPRRY), are a transit peptide targeting the mitochondrion.

It belongs to the class-IV pyridoxal-phosphate-dependent aminotransferase family. Homodimer. The cofactor is pyridoxal 5'-phosphate.

The protein resides in the mitochondrion. The catalysed reaction is L-leucine + 2-oxoglutarate = 4-methyl-2-oxopentanoate + L-glutamate. The enzyme catalyses L-isoleucine + 2-oxoglutarate = (S)-3-methyl-2-oxopentanoate + L-glutamate. It carries out the reaction L-valine + 2-oxoglutarate = 3-methyl-2-oxobutanoate + L-glutamate. Functionally, catalyzes the first reaction in the catabolism of the essential branched chain amino acids leucine, isoleucine, and valine. May also function as a transporter of branched chain alpha-keto acids. The sequence is that of Branched-chain-amino-acid aminotransferase, mitochondrial (BCAT2) from Sus scrofa (Pig).